A 496-amino-acid chain; its full sequence is Anaerobic nitric oxide reductase flavorubredoxin (496 aa).

Residues Thr-30–Ile-210 form a zinc metallo-hydrolase region. 6 residues coordinate Fe cation: His-79, Glu-81, Asp-83, His-147, Asp-166, and His-227. One can recognise a Flavodoxin-like domain in the interval Ile-254 to Ala-393. FMN-binding positions include Ser-260 to Asn-264 and Ala-342 to Val-369. A Rubredoxin-like domain is found at Lys-444 to Ile-495. Fe cation is bound by residues Cys-449, Cys-452, Cys-482, and Cys-485.

In the N-terminal section; belongs to the zinc metallo-hydrolase group 3 family. As to quaternary structure, homotetramer. Requires Fe cation as cofactor. The cofactor is FMN.

The protein resides in the cytoplasm. It functions in the pathway nitrogen metabolism; nitric oxide reduction. Anaerobic nitric oxide reductase; uses NADH to detoxify nitric oxide (NO), protecting several 4Fe-4S NO-sensitive enzymes. Has at least 2 reductase partners, only one of which (NorW, flavorubredoxin reductase) has been identified. NO probably binds to the di-iron center; electrons enter from the NorW at rubredoxin and are transferred sequentially to the FMN center and the di-iron center. Also able to function as an aerobic oxygen reductase. In Aliivibrio fischeri (strain ATCC 700601 / ES114) (Vibrio fischeri), this protein is Anaerobic nitric oxide reductase flavorubredoxin.